Here is a 233-residue protein sequence, read N- to C-terminus: ATP synthase subunit a 2 (233 aa).

5 helical membrane passes run 15-35, 78-98, 107-127, 169-189, and 194-214; these read FVVI…LVIG, YLAF…LTVV, SLST…IYGI, IMSG…FVPV, and LGLV…LVYI.

This sequence belongs to the ATPase A chain family. In terms of assembly, F-type ATPases have 2 components, CF(1) - the catalytic core - and CF(0) - the membrane proton channel. CF(1) has five subunits: alpha(3), beta(3), gamma(1), delta(1), epsilon(1). CF(0) has four main subunits: a, b, b' and c.

It is found in the cellular thylakoid membrane. Its function is as follows. Key component of the proton channel; it plays a direct role in the translocation of protons across the membrane. The protein is ATP synthase subunit a 2 of Picosynechococcus sp. (strain ATCC 27264 / PCC 7002 / PR-6) (Agmenellum quadruplicatum).